Consider the following 238-residue polypeptide: MGSISLSNSMPITRLPLLTSLYHQSFLPISSSSFSLLPLSNRRRSSTFSPSITVSAFFAAPASVNNNNSVPAKNGGYTVGDFMTPRQNLHVVKPSTSVDDALELLVEKKVTGLPVIDDNWTLVGVVSDYDLLALDSISGRSQNDTNLFPDVDSTWKTFNELQKLISKTYGKVVGDLMTPSPLVVRDSTNLEDAARLLLETKFRRLPVVDADGKLIGILTRGNVVRAALQIKRETENST.

A chloroplast-targeting transit peptide spans 1–71; sequence MGSISLSNSM…ASVNNNNSVP (71 aa). CBS domains follow at residues 83-145 and 177-234; these read MTPR…QNDT and MTPS…KRET.

Its subcellular location is the plastid. The protein resides in the chloroplast stroma. In Arabidopsis thaliana (Mouse-ear cress), this protein is CBS domain-containing protein CBSX2, chloroplastic (CBSX2).